A 941-amino-acid chain; its full sequence is MKIKQIKQSLSLLLIITLIMSLFVPMASANTNESKSNAFPFSDVKKTSWSFPYIKDLYEQEVITGTSATTFSPTDSVTRAQFTVMLTRGLGLEASSKDYPFKDRKNWAYKEIQAAYEAGIVTGKTNGEFAPNENITREQMAAMAVRAYEYLENELSLPEEQREYNDSSSISTFAQDAVQKAYVLELMEGNTDGYFQPKRNSTREQSAKVISTLLWKVASHDYLYHTEAVKSPSEAGALQLVELNGQLTLAGEDGTPVQLRGMSTHGLQWFGEIVNENAFVALSNDWGSNMIRLAMYIGENGYATNPEVKDLVYEGIELAFEHDMYVIVDWHVHAPGDPRADVYSGAYDFFEEIADHYKDHPKNHYIIWELANEPSPNNNGGPGLTNDEKGWEAVKEYAEPIVEMLREKGDNMILVGNPNWSQRPDLSADNPIDAENIMYSVHFYTGSHGASHIGYPEGTPSSERSNVMANVRYALDNGVAVFATEWGTSQANGDGGPYFDEADVWLNFLNKHNISWANWSLTNKNEISGAFTPFELGRTDATDLDPGANQVWAPEELSLSGEYVRARIKGIEYTPIDRTKFTKLVWDFNDGTTQGFQVNGDSPNKESITLSNNNDALQIEGLNVSNDISEGNYWDNVRLSADGWSENVDILGATELTIDVIVEEPTTVSIAAIPQGPAAGWANPTRAIKVTEDDFESFGDGYKALVTITSEDSPSLETIATSPEDNTMSNIILFVGTEDADVISLDNITVSGTEIEIEVIHDEKGTATLPSTFEDGTRQGWDWHTESGVKTALTIEEANGSNALSWEYAYPEVKPSDGWATAPRLDFWKDELVRGTSDYISFDFYIDAVRASEGAISINAVFQPPANGYWQEVPTTFEIDLTELDSATVTSDELYHYEVKINIRDIEAITDDTELRNLLLIFADEDSDFAGRVFVDNVRFE.

The N-terminal stretch at 1–29 (MKIKQIKQSLSLLLIITLIMSLFVPMASA) is a signal peptide. SLH domains follow at residues 37–94 (NAFP…GLEA), 95–158 (SSKD…LSLP), and 161–224 (QREY…DYLY). Residue E373 is the Proton donor of the active site. The active-site Nucleophile is the E485.

This sequence belongs to the glycosyl hydrolase 5 (cellulase A) family.

The enzyme catalyses Endohydrolysis of (1-&gt;4)-beta-D-glucosidic linkages in cellulose, lichenin and cereal beta-D-glucans.. In Bacillus sp. (strain KSM-635), this protein is Endoglucanase.